Here is a 308-residue protein sequence, read N- to C-terminus: 1,4-dihydroxy-2-naphthoate octaprenyltransferase (308 aa).

9 helical membrane-spanning segments follow: residues 22 to 42 (TLPLALASIFTGSALGYWANP), 47 to 67 (GLVMVLCLLTTILLQVLSNFA), 101 to 121 (WGLILMVMASFLSGSFLIGIA), 129 to 149 (FAFAGLGILAIVAAITYTVGV), 153 to 173 (GYMGLGDISVLVFFGLLGVGG), 186 to 206 (IILPAIGSGLLASAVLNINNL), 235 to 255 (ILLSVAALCYLAFAVATAISW), 256 to 276 (TNYLFVLAMPLLAKHAIFVYC), and 286 to 306 (ILAQMSMISLLINILFSLGLL).

It belongs to the MenA family. Type 1 subfamily.

It localises to the cell inner membrane. It catalyses the reaction an all-trans-polyprenyl diphosphate + 1,4-dihydroxy-2-naphthoate + H(+) = a 2-demethylmenaquinol + CO2 + diphosphate. Its pathway is quinol/quinone metabolism; menaquinone biosynthesis; menaquinol from 1,4-dihydroxy-2-naphthoate: step 1/2. Functionally, conversion of 1,4-dihydroxy-2-naphthoate (DHNA) to demethylmenaquinone (DMK). This chain is 1,4-dihydroxy-2-naphthoate octaprenyltransferase, found in Haemophilus influenzae (strain ATCC 51907 / DSM 11121 / KW20 / Rd).